We begin with the raw amino-acid sequence, 364 residues long: WAT1-related protein At3g30340 (364 aa).

Helical transmembrane passes span 9 to 29, 41 to 61, 76 to 96, 102 to 122, 138 to 158, 183 to 203, 215 to 235, 251 to 271, 277 to 297, and 304 to 324; these read WKAVLMMSMINIGLSVVNVMF, VATTYRLAVGTLFLIPFAIFL, SLFFSALLGTSLVQYFFLIGL, TFSLAFSNMVPSVTFALALVF, LLGTMICICGALVLTLYKGTA, WAMGSIMLVISIIIWSSWFIV, YTSTTILSFFGVIQSALLSLI, VLALLYSGIVGSGLCYVGMSW, GAVFTSSFIPLIQVFAAIFSF, and IYCGSVIGSMVIIVGLYILLW. EamA domains lie at 26-152 and 195-323; these read NVMF…LVLT and IIWS…YILL.

This sequence belongs to the drug/metabolite transporter (DMT) superfamily. Plant drug/metabolite exporter (P-DME) (TC 2.A.7.4) family.

The protein resides in the membrane. This is WAT1-related protein At3g30340 from Arabidopsis thaliana (Mouse-ear cress).